We begin with the raw amino-acid sequence, 307 residues long: tRNA dimethylallyltransferase (307 aa).

Position 7-14 (7-14) interacts with ATP; that stretch reads GPTAGGKT. 9–14 is a substrate binding site; it reads TAGGKT. The interaction with substrate tRNA stretch occupies residues 32–35; that stretch reads DSRQ.

It belongs to the IPP transferase family. In terms of assembly, monomer. It depends on Mg(2+) as a cofactor.

It catalyses the reaction adenosine(37) in tRNA + dimethylallyl diphosphate = N(6)-dimethylallyladenosine(37) in tRNA + diphosphate. Its function is as follows. Catalyzes the transfer of a dimethylallyl group onto the adenine at position 37 in tRNAs that read codons beginning with uridine, leading to the formation of N6-(dimethylallyl)adenosine (i(6)A). The sequence is that of tRNA dimethylallyltransferase from Elusimicrobium minutum (strain Pei191).